A 183-amino-acid polypeptide reads, in one-letter code: ATP synthase subunit delta (183 aa).

The protein belongs to the ATPase delta chain family. As to quaternary structure, F-type ATPases have 2 components, F(1) - the catalytic core - and F(0) - the membrane proton channel. F(1) has five subunits: alpha(3), beta(3), gamma(1), delta(1), epsilon(1). F(0) has three main subunits: a(1), b(2) and c(10-14). The alpha and beta chains form an alternating ring which encloses part of the gamma chain. F(1) is attached to F(0) by a central stalk formed by the gamma and epsilon chains, while a peripheral stalk is formed by the delta and b chains.

It localises to the cell inner membrane. Functionally, f(1)F(0) ATP synthase produces ATP from ADP in the presence of a proton or sodium gradient. F-type ATPases consist of two structural domains, F(1) containing the extramembraneous catalytic core and F(0) containing the membrane proton channel, linked together by a central stalk and a peripheral stalk. During catalysis, ATP synthesis in the catalytic domain of F(1) is coupled via a rotary mechanism of the central stalk subunits to proton translocation. In terms of biological role, this protein is part of the stalk that links CF(0) to CF(1). It either transmits conformational changes from CF(0) to CF(1) or is implicated in proton conduction. The sequence is that of ATP synthase subunit delta from Ehrlichia canis (strain Jake).